The chain runs to 381 residues: GDP-mannose-dependent alpha-(1-6)-phosphatidylinositol dimannoside mannosyltransferase (381 aa).

Residues Gly-16, Arg-207, 211–212, 283–287, and Glu-291 contribute to the substrate site; these read EK and ETFGL.

It belongs to the glycosyltransferase group 1 family. Glycosyltransferase 4 subfamily.

Its pathway is phospholipid metabolism; phosphatidylinositol metabolism. Its function is as follows. Catalyzes the addition of a mannose residue from GDP-D-mannose to the position 6 of the alpha-1,6-linked mannose residue of the triacyl phosphatidylinositol dimannoside (Ac3PIM2) to generate triacyl phosphatidylinositol trimannoside (Ac3PIM3). The sequence is that of GDP-mannose-dependent alpha-(1-6)-phosphatidylinositol dimannoside mannosyltransferase (pimC) from Mycobacterium tuberculosis (strain ATCC 25177 / H37Ra).